Consider the following 148-residue polypeptide: 3-dehydroquinate dehydratase (148 aa).

The active-site Proton acceptor is the Tyr26. Substrate is bound by residues Asn77, His83, and Asp90. His103 functions as the Proton donor in the catalytic mechanism. Residues Leu104–Ser105 and Arg114 contribute to the substrate site.

This sequence belongs to the type-II 3-dehydroquinase family. Homododecamer.

The enzyme catalyses 3-dehydroquinate = 3-dehydroshikimate + H2O. It functions in the pathway metabolic intermediate biosynthesis; chorismate biosynthesis; chorismate from D-erythrose 4-phosphate and phosphoenolpyruvate: step 3/7. Catalyzes a trans-dehydration via an enolate intermediate. In Chlorobaculum tepidum (strain ATCC 49652 / DSM 12025 / NBRC 103806 / TLS) (Chlorobium tepidum), this protein is 3-dehydroquinate dehydratase.